A 444-amino-acid polypeptide reads, in one-letter code: Probable D-serine dehydratase (444 aa).

The residue at position 110 (K110) is an N6-(pyridoxal phosphate)lysine.

This sequence belongs to the serine/threonine dehydratase family. DsdA subfamily. Pyridoxal 5'-phosphate is required as a cofactor.

It carries out the reaction D-serine = pyruvate + NH4(+). This Burkholderia thailandensis (strain ATCC 700388 / DSM 13276 / CCUG 48851 / CIP 106301 / E264) protein is Probable D-serine dehydratase.